Consider the following 396-residue polypeptide: N-acyl-phosphatidylethanolamine-hydrolyzing phospholipase D (396 aa).

Methionine 1 carries the post-translational modification N-acetylmethionine. 2 stretches are compositionally biased toward polar residues: residues 1–12 and 26–37; these read MDENENSQSPAP and NSVQNSGGSESS. Positions 1–41 are disordered; the sequence is MDENENSQSPAPSHQYPKETLRKRQNSVQNSGGSESSRLSR. 2 residues coordinate Zn(2+): histidine 185 and histidine 187. Tyrosine 188 provides a ligand contact to an N-acyl-1,2-diacyl-sn-glycero-3-phosphoethanolamine. Aspartate 189, histidine 190, and histidine 253 together coordinate Zn(2+). Residue lysine 256 coordinates deoxycholate. Position 284 (aspartate 284) interacts with Zn(2+). Residue histidine 321 coordinates an N-acyl-1,2-diacyl-sn-glycero-3-phosphoethanolamine. Histidine 343 contacts Zn(2+). Residue alanine 348 participates in deoxycholate binding.

It belongs to the NAPE-PLD family. Homodimer. Bile acids promote the assembly of inactive monomers into an active dimer and enable catalysis. Zn(2+) serves as cofactor. In terms of tissue distribution, widely expressed. Highest expression in brain, kidney and testis (at protein level). Expressed in adipose tissue (at protein level).

It localises to the golgi apparatus membrane. The protein localises to the early endosome membrane. The protein resides in the nucleus envelope. It is found in the nucleus. Its subcellular location is the nucleoplasm. It carries out the reaction an N-acyl-1,2-diacyl-sn-glycero-3-phosphoethanolamine + H2O = an N-acylethanolamine + a 1,2-diacyl-sn-glycero-3-phosphate + H(+). The enzyme catalyses N-butanoyl-1-hexadecanoyl-2-(9Z,12Z-octadecadienoyl)-sn-glycero-3-phosphoethanolamine + H2O = N-butanoyl ethanolamine + 1-hexadecanoyl-2-(9Z,12Z-octadecadienoyl)-sn-glycero-3-phosphate + H(+). It catalyses the reaction N-hexanoyl-1-hexadecanoyl-2-(9Z,12Z-octadecadienoyl)-sn-glycero-3-phosphoethanolamine + H2O = N-hexanoyl ethanolamine + 1-hexadecanoyl-2-(9Z,12Z-octadecadienoyl)-sn-glycero-3-phosphate + H(+). The catalysed reaction is N-octanoyl-1-hexadecanoyl-2-(9Z,12Z-octadecadienoyl)-sn-glycero-3-phosphoethanolamine + H2O = N-octanoyl ethanolamine + 1-hexadecanoyl-2-(9Z,12Z-octadecadienoyl)-sn-glycero-3-phosphate + H(+). It carries out the reaction N-decanoyl-1-hexadecanoyl-2-(9Z,12Z-octadecadienoyl)-sn-glycero-3-phosphoethanolamine + H2O = N-decanoyl ethanolamine + 1-hexadecanoyl-2-(9Z,12Z-octadecadienoyl)-sn-glycero-3-phosphate + H(+). The enzyme catalyses N-dodecanoyl-1,2-di-(9Z-octadecenoyl)-sn-glycero-3-phosphoethanolamine + H2O = N-dodecanoylethanolamine + 1,2-di-(9Z-octadecenoyl)-sn-glycero-3-phosphate + H(+). It catalyses the reaction N-tetradecanoyl-1,2-di-(9Z-octadecenoyl)-sn-glycero-3-phosphoethanolamine + H2O = N-tetradecanoylethanolamine + 1,2-di-(9Z-octadecenoyl)-sn-glycero-3-phosphate + H(+). The catalysed reaction is N-hexadecanoyl-1,2-di-(9Z-octadecenoyl)-sn-glycero-3-phosphoethanolamine + H2O = N-hexadecanoylethanolamine + 1,2-di-(9Z-octadecenoyl)-sn-glycero-3-phosphate + H(+). It carries out the reaction N,1-dihexadecanoyl-2-(9Z,12Z-octadecadienoyl)-sn-glycero-3-phosphoethanolamine + H2O = 1-hexadecanoyl-2-(9Z,12Z-octadecadienoyl)-sn-glycero-3-phosphate + N-hexadecanoylethanolamine + H(+). The enzyme catalyses N-octadecanoyl-1,2-di-(9Z-octadecenoyl)-sn-glycero-3-phosphoethanolamine + H2O = N-octadecanoyl ethanolamine + 1,2-di-(9Z-octadecenoyl)-sn-glycero-3-phosphate + H(+). It catalyses the reaction N,1,2-tri-(9Z-octadecenoyl)-sn-glycero-3-phosphoethanolamine + H2O = N-(9Z-octadecenoyl) ethanolamine + 1,2-di-(9Z-octadecenoyl)-sn-glycero-3-phosphate + H(+). The catalysed reaction is N-(5Z,8Z,11Z,14Z-eicosatetraenoyl)-1,2-diacyl-sn-glycero-3-phosphoethanolamine + H2O = N-(5Z,8Z,11Z,14Z-eicosatetraenoyl)-ethanolamine + a 1,2-diacyl-sn-glycero-3-phosphate + H(+). It carries out the reaction N-(5Z,8Z,11Z,14Z-eicosatetraenoyl)-1,2-di-(9Z-octadecenoyl)-sn-glycero-3-phosphoethanolamine + H2O = N-(5Z,8Z,11Z,14Z-eicosatetraenoyl)-ethanolamine + 1,2-di-(9Z-octadecenoyl)-sn-glycero-3-phosphate + H(+). The enzyme catalyses 1-O-(1Z-octadecenoyl)-2-(9Z-octadecenoyl)-sn-glycero-3-phospho-N-hexadecanoyl-ethanolamine + H2O = 1-O-(1Z-octadecenoyl)-2-(9Z-octadecenoyl)-sn-glycero-3-phosphate + N-hexadecanoylethanolamine + H(+). It catalyses the reaction N,1-diacyl-sn-glycero-3-phosphoethanolamine + H2O = an N-acylethanolamine + a 1-acyl-sn-glycero-3-phosphate + H(+). The catalysed reaction is N,1-dihexadecanoyl-sn-glycero-3-phosphoethanolamine + H2O = N-hexadecanoylethanolamine + 1-hexadecanoyl-sn-glycero-3-phosphate + H(+). It carries out the reaction N-(5Z,8Z,11Z,14Z-eicosatetraenoyl)-1-(9Z-octadecenoyl)-sn-glycero-3-phosphoethanolamine + H2O = N-(5Z,8Z,11Z,14Z-eicosatetraenoyl)-ethanolamine + 1-(9Z-octadecenoyl)-sn-glycero-3-phosphate + H(+). Its activity is regulated as follows. Activated by divalent cations. Activated by bile acids. Activated by membrane phospholipids such as phosphatidylethanolamines. Inhibited by cardiolipins. D-type phospholipase that hydrolyzes N-acyl-phosphatidylethanolamines (NAPEs) to produce bioactive N-acylethanolamines/fatty acid ethanolamides (NAEs/FAEs) and phosphatidic acid. Cleaves the terminal phosphodiester bond of diacyl- and alkenylacyl-NAPEs, primarily playing a role in the generation of long-chain saturated and monounsaturated NAEs in the brain. May control NAPE homeostasis in dopaminergic neuron membranes and regulate neuron survival, partly through RAC1 activation. As a regulator of lipid metabolism in the adipose tissue, mediates the crosstalk between adipocytes, gut microbiota and immune cells to control body temperature and weight. In particular, regulates energy homeostasis by promoting cold-induced brown or beige adipocyte differentiation program to generate heat from fatty acids and glucose. Has limited D-type phospholipase activity toward N-acyl lyso-NAPEs. This Rattus norvegicus (Rat) protein is N-acyl-phosphatidylethanolamine-hydrolyzing phospholipase D (Napepld).